The following is a 466-amino-acid chain: MAQTLYDKIWQAHTIASINEQTDLLYIDRHLVHEVTSPQAFAGLREKNRTVRCPEKTFATMDHNVSTKSRSLDAASEVSKNQLMALDANCKEFGIVLYDLNSINQGIVHVMGPEQGITLPGTTIVCGDSHTSTHGAFGALAHGIGTSEVEHVLATQTLQQKKAKSLKIQINGRLRPTVTAKDLIMAVIGKLGTAGGTGYVAEFCGEGIEALSMEARMTLCNMSIEMGAKAGLIASDQITYDYLKGRPFAPKGADFDAAVKYWETLKTDDGAQFDHVVELEASSIQPQITWGTSPEQVIGVDECIPDPDKEPDLIKADAIRSALKYMGLKAGEKLSSAKVDTVFIGSCTNSRIEDLRAAAKIVEGKKVVAGIEALIVPGSGLVKKQAEDEGLADIFKAAGFEWREPGCSMCLAMNDDRLGAGKRCASTSNRNFEGRQGRGGRTHLVSPAMAAAAAIHGHFVDIRGEA.

[4Fe-4S] cluster is bound by residues C347, C407, and C410.

The protein belongs to the aconitase/IPM isomerase family. LeuC type 1 subfamily. Heterodimer of LeuC and LeuD. [4Fe-4S] cluster serves as cofactor.

It carries out the reaction (2R,3S)-3-isopropylmalate = (2S)-2-isopropylmalate. It functions in the pathway amino-acid biosynthesis; L-leucine biosynthesis; L-leucine from 3-methyl-2-oxobutanoate: step 2/4. Catalyzes the isomerization between 2-isopropylmalate and 3-isopropylmalate, via the formation of 2-isopropylmaleate. The chain is 3-isopropylmalate dehydratase large subunit from Pseudoalteromonas translucida (strain TAC 125).